Reading from the N-terminus, the 640-residue chain is tRNA-dihydrouridine(47) synthase [NAD(P)(+)]-like (640 aa).

Positions 1–10 are enriched in low complexity; the sequence is MAEVAEVAAE. 2 disordered regions span residues 1–22 and 47–106; these read MAEV…VGAC and DKQE…PHMK. Ala2 carries the post-translational modification N-acetylalanine. Over residues 64–91 the composition is skewed to basic and acidic residues; that stretch reads PEAKRIRLEDGQENGKTEVAVESHERQV. Residues 92 to 106 show a composition bias toward basic residues; the sequence is PKRARGQNKSRPHMK. 2 C3H1-type zinc fingers span residues 110 to 140 and 148 to 178; these read YDKE…HDVG and ADLG…HLGP. Position 267 is a phosphoserine (Ser267). Residues 301–303 and Gln355 each bind FMN; that span reads PLT. The Proton donor role is filled by Cys386. Lys406 is covalently cross-linked (Glycyl lysine isopeptide (Lys-Gly) (interchain with G-Cter in SUMO2)). FMN contacts are provided by residues Lys425, His455, 487–489, and 510–511; these read NGD and AR.

The protein belongs to the Dus family. Dus3 subfamily. Requires FMN as cofactor.

The enzyme catalyses 5,6-dihydrouridine(47) in tRNA + NAD(+) = uridine(47) in tRNA + NADH + H(+). The catalysed reaction is 5,6-dihydrouridine(47) in tRNA + NADP(+) = uridine(47) in tRNA + NADPH + H(+). It catalyses the reaction a 5,6-dihydrouridine in mRNA + NAD(+) = a uridine in mRNA + NADH + H(+). It carries out the reaction a 5,6-dihydrouridine in mRNA + NADP(+) = a uridine in mRNA + NADPH + H(+). Functionally, catalyzes the synthesis of dihydrouridine, a modified base, in various RNAs, such as tRNAs, mRNAs and some long non-coding RNAs (lncRNAs). Mainly modifies the uridine in position 47 (U47) in the D-loop of most cytoplasmic tRNAs. Also able to mediate the formation of dihydrouridine in some mRNAs, thereby regulating their translation. This is tRNA-dihydrouridine(47) synthase [NAD(P)(+)]-like from Rattus norvegicus (Rat).